Consider the following 364-residue polypeptide: tRNA 2-selenouridine synthase (364 aa).

The Rhodanese domain maps to 14–137 (LLADTPLIDV…LRQTAIQATW (124 aa)). Catalysis depends on Cys-97, which acts as the S-selanylcysteine intermediate.

This sequence belongs to the SelU family. In terms of assembly, monomer.

The catalysed reaction is 5-methylaminomethyl-2-thiouridine(34) in tRNA + selenophosphate + (2E)-geranyl diphosphate + H2O + H(+) = 5-methylaminomethyl-2-selenouridine(34) in tRNA + (2E)-thiogeraniol + phosphate + diphosphate. It carries out the reaction 5-methylaminomethyl-2-thiouridine(34) in tRNA + (2E)-geranyl diphosphate = 5-methylaminomethyl-S-(2E)-geranyl-thiouridine(34) in tRNA + diphosphate. The enzyme catalyses 5-methylaminomethyl-S-(2E)-geranyl-thiouridine(34) in tRNA + selenophosphate + H(+) = 5-methylaminomethyl-2-(Se-phospho)selenouridine(34) in tRNA + (2E)-thiogeraniol. It catalyses the reaction 5-methylaminomethyl-2-(Se-phospho)selenouridine(34) in tRNA + H2O = 5-methylaminomethyl-2-selenouridine(34) in tRNA + phosphate. In terms of biological role, involved in the post-transcriptional modification of the uridine at the wobble position (U34) of tRNA(Lys), tRNA(Glu) and tRNA(Gln). Catalyzes the conversion of 2-thiouridine (S2U-RNA) to 2-selenouridine (Se2U-RNA). Acts in a two-step process involving geranylation of 2-thiouridine (S2U) to S-geranyl-2-thiouridine (geS2U) and subsequent selenation of the latter derivative to 2-selenouridine (Se2U) in the tRNA chain. The sequence is that of tRNA 2-selenouridine synthase from Salmonella heidelberg (strain SL476).